Reading from the N-terminus, the 63-residue chain is Putative ankyrin repeat protein RF_p14 (63 aa).

ANK repeat units lie at residues 11-43 and 44-63; these read KLNQKLMRAAATGDIEAVQKLVLRGADIYCRDH and QGDTALSLAAGSGYLDILDI.

In Rickettsia felis (strain ATCC VR-1525 / URRWXCal2) (Rickettsia azadi), this protein is Putative ankyrin repeat protein RF_p14.